The following is a 118-amino-acid chain: Small ribosomal subunit protein uS13 (118 aa).

Residues 94–118 are disordered; that stretch reads SLPLRGQRTKTNARTRKGPRKPIRK.

It belongs to the universal ribosomal protein uS13 family. Part of the 30S ribosomal subunit. Forms a loose heterodimer with protein S19. Forms two bridges to the 50S subunit in the 70S ribosome.

Located at the top of the head of the 30S subunit, it contacts several helices of the 16S rRNA. In the 70S ribosome it contacts the 23S rRNA (bridge B1a) and protein L5 of the 50S subunit (bridge B1b), connecting the 2 subunits; these bridges are implicated in subunit movement. Contacts the tRNAs in the A and P-sites. The protein is Small ribosomal subunit protein uS13 of Shewanella sediminis (strain HAW-EB3).